Here is a 238-residue protein sequence, read N- to C-terminus: Phosphoribosylaminoimidazole-succinocarboxamide synthase (238 aa).

It belongs to the SAICAR synthetase family.

The catalysed reaction is 5-amino-1-(5-phospho-D-ribosyl)imidazole-4-carboxylate + L-aspartate + ATP = (2S)-2-[5-amino-1-(5-phospho-beta-D-ribosyl)imidazole-4-carboxamido]succinate + ADP + phosphate + 2 H(+). It participates in purine metabolism; IMP biosynthesis via de novo pathway; 5-amino-1-(5-phospho-D-ribosyl)imidazole-4-carboxamide from 5-amino-1-(5-phospho-D-ribosyl)imidazole-4-carboxylate: step 1/2. The polypeptide is Phosphoribosylaminoimidazole-succinocarboxamide synthase (Marinomonas sp. (strain MWYL1)).